The primary structure comprises 217 residues: Probable cytidylate kinase (217 aa).

9 to 17 (GPAGSGKST) is a binding site for ATP.

It belongs to the cytidylate kinase family. Type 1 subfamily.

It carries out the reaction CMP + ATP = CDP + ADP. It catalyses the reaction dCMP + ATP = dCDP + ADP. The polypeptide is Probable cytidylate kinase (Vairimorpha ceranae (strain BRL01) (Microsporidian parasite)).